A 213-amino-acid polypeptide reads, in one-letter code: MTDFRQDFLKFSLAQNVLKFGEFTTKAGRRSPYFFNAGLFNDGLSTLQLAKFYAQSIIESGIRFDMLFGPAYKGIILAAATAMMLAEKGVNVPFAYNRKEAKDHGEGGVLVGAPLKGRVLIIDDVISAGTSVRESIKLIEAEGATPAGVAIALDRMEKGTGELSAVQEVEKQYGLPVAPIASLNDLFILLQNNPEFGQFLEPVRAYRRQYGVE.

Residue Lys26 participates in 5-phospho-alpha-D-ribose 1-diphosphate binding. 34-35 contributes to the orotate binding site; it reads FF. 5-phospho-alpha-D-ribose 1-diphosphate contacts are provided by residues 72–73, Arg98, Lys99, Lys102, His104, and 123–131; these read YK and DDVISAGTS. Ser127 and Arg155 together coordinate orotate.

The protein belongs to the purine/pyrimidine phosphoribosyltransferase family. PyrE subfamily. Homodimer. The cofactor is Mg(2+).

It catalyses the reaction orotidine 5'-phosphate + diphosphate = orotate + 5-phospho-alpha-D-ribose 1-diphosphate. Its pathway is pyrimidine metabolism; UMP biosynthesis via de novo pathway; UMP from orotate: step 1/2. Its function is as follows. Catalyzes the transfer of a ribosyl phosphate group from 5-phosphoribose 1-diphosphate to orotate, leading to the formation of orotidine monophosphate (OMP). The polypeptide is Orotate phosphoribosyltransferase (Neisseria meningitidis serogroup A / serotype 4A (strain DSM 15465 / Z2491)).